The following is a 146-amino-acid chain: SecB-like chaperone SmegB (146 aa).

Belongs to the SecB-like family.

Functionally, chaperone component of an orphan antitoxin chaperone (AC) system; there is no toxin gene in close genomic proximity. When expressed in E.coli complements the cold-sensitive phenotype of a secB deletion, suggesting it may have a generic chaperone function. Does not however complement the toxin-neutralizing effect of its M.tuberculosis paralog Rv1957 (AC P95257) in E.coli, probably because the antitoxin genes are not from the same family. The polypeptide is SecB-like chaperone SmegB (Mycolicibacterium smegmatis (strain ATCC 700084 / mc(2)155) (Mycobacterium smegmatis)).